The chain runs to 234 residues: uncharacterized protein (234 aa).

4 helical membrane passes run Ile-28–Ser-48, Phe-67–Ile-87, Gly-123–Ile-143, and Leu-154–Tyr-174.

This sequence belongs to the complex I subunit 2 family.

The protein resides in the mitochondrion membrane. This is an uncharacterized protein from Neurospora crassa (strain ATCC 24698 / 74-OR23-1A / CBS 708.71 / DSM 1257 / FGSC 987).